The following is a 336-amino-acid chain: Fructose-1,6-bisphosphatase class 1 (336 aa).

Mg(2+)-binding residues include E90, D112, L114, and D115. Residues 115-118 (DGSS), N207, and K273 each bind substrate. Residue E279 participates in Mg(2+) binding.

Belongs to the FBPase class 1 family. As to quaternary structure, homotetramer. Requires Mg(2+) as cofactor.

Its subcellular location is the cytoplasm. The catalysed reaction is beta-D-fructose 1,6-bisphosphate + H2O = beta-D-fructose 6-phosphate + phosphate. It functions in the pathway carbohydrate biosynthesis; gluconeogenesis. This is Fructose-1,6-bisphosphatase class 1 from Xanthomonas oryzae pv. oryzae (strain PXO99A).